We begin with the raw amino-acid sequence, 224 residues long: Probable Brix domain-containing ribosomal biogenesis protein (224 aa).

The region spanning 1-196 (MMLITTSHRP…IWIMEDGRRW (196 aa)) is the Brix domain.

Its function is as follows. Probably involved in the biogenesis of the ribosome. The polypeptide is Probable Brix domain-containing ribosomal biogenesis protein (Pyrococcus horikoshii (strain ATCC 700860 / DSM 12428 / JCM 9974 / NBRC 100139 / OT-3)).